The primary structure comprises 432 residues: Alkaline protease secretion protein AprE (432 aa).

Residues 1 to 14 (MTRTVKRDENAYAR) lie on the Cytoplasmic side of the membrane. A helical membrane pass occupies residues 15-36 (LGWLLVLFGFGGALLWAAFAPL). At 37-432 (DQGVAVPATV…DRAHVALAEN (396 aa)) the chain is on the periplasmic side.

The protein belongs to the membrane fusion protein (MFP) (TC 8.A.1) family.

It is found in the cell inner membrane. Its function is as follows. Involved in the secretion of alkaline protease. The sequence is that of Alkaline protease secretion protein AprE (aprE) from Pseudomonas aeruginosa (strain ATCC 15692 / DSM 22644 / CIP 104116 / JCM 14847 / LMG 12228 / 1C / PRS 101 / PAO1).